The following is a 123-amino-acid chain: Small ribosomal subunit protein uS13 (123 aa).

The segment at 95 to 123 (GLPVRGQSSKTNARTRKGPRRSVMSRKKK) is disordered. Basic residues predominate over residues 107–123 (ARTRKGPRRSVMSRKKK).

It belongs to the universal ribosomal protein uS13 family. Part of the 30S ribosomal subunit. Forms a loose heterodimer with protein S19. Forms two bridges to the 50S subunit in the 70S ribosome.

In terms of biological role, located at the top of the head of the 30S subunit, it contacts several helices of the 16S rRNA. In the 70S ribosome it contacts the 23S rRNA (bridge B1a) and protein L5 of the 50S subunit (bridge B1b), connecting the 2 subunits; these bridges are implicated in subunit movement. Contacts the tRNAs in the A and P-sites. In Maridesulfovibrio salexigens (strain ATCC 14822 / DSM 2638 / NCIMB 8403 / VKM B-1763) (Desulfovibrio salexigens), this protein is Small ribosomal subunit protein uS13.